The primary structure comprises 251 residues: Pyridoxine 5'-phosphate synthase (251 aa).

N7 serves as a coordination point for 3-amino-2-oxopropyl phosphate. D9–H10 is a 1-deoxy-D-xylulose 5-phosphate binding site. Position 18 (R18) interacts with 3-amino-2-oxopropyl phosphate. The active-site Proton acceptor is H43. Residues R45 and H50 each contribute to the 1-deoxy-D-xylulose 5-phosphate site. The Proton acceptor role is filled by E70. T100 contributes to the 1-deoxy-D-xylulose 5-phosphate binding site. Residue H198 is the Proton donor of the active site. Residues A199 and G220–H221 contribute to the 3-amino-2-oxopropyl phosphate site.

Belongs to the PNP synthase family. Homooctamer; tetramer of dimers.

It is found in the cytoplasm. The enzyme catalyses 3-amino-2-oxopropyl phosphate + 1-deoxy-D-xylulose 5-phosphate = pyridoxine 5'-phosphate + phosphate + 2 H2O + H(+). The protein operates within cofactor biosynthesis; pyridoxine 5'-phosphate biosynthesis; pyridoxine 5'-phosphate from D-erythrose 4-phosphate: step 5/5. Its function is as follows. Catalyzes the complicated ring closure reaction between the two acyclic compounds 1-deoxy-D-xylulose-5-phosphate (DXP) and 3-amino-2-oxopropyl phosphate (1-amino-acetone-3-phosphate or AAP) to form pyridoxine 5'-phosphate (PNP) and inorganic phosphate. The polypeptide is Pyridoxine 5'-phosphate synthase (Dechloromonas aromatica (strain RCB)).